Here is a 238-residue protein sequence, read N- to C-terminus: Purine nucleoside phosphorylase DeoD-type (238 aa).

His5 is a binding site for a purine D-ribonucleoside. Phosphate is bound by residues Gly21, Arg25, Arg44, and Arg88–Ser91. A purine D-ribonucleoside-binding positions include Glu180–Glu182 and Ser204–Asp205. Asp205 serves as the catalytic Proton donor.

The protein belongs to the PNP/UDP phosphorylase family. In terms of assembly, homohexamer; trimer of homodimers.

It catalyses the reaction a purine D-ribonucleoside + phosphate = a purine nucleobase + alpha-D-ribose 1-phosphate. The enzyme catalyses a purine 2'-deoxy-D-ribonucleoside + phosphate = a purine nucleobase + 2-deoxy-alpha-D-ribose 1-phosphate. Its function is as follows. Catalyzes the reversible phosphorolytic breakdown of the N-glycosidic bond in the beta-(deoxy)ribonucleoside molecules, with the formation of the corresponding free purine bases and pentose-1-phosphate. This Xenorhabdus nematophila (strain ATCC 19061 / DSM 3370 / CCUG 14189 / LMG 1036 / NCIMB 9965 / AN6) protein is Purine nucleoside phosphorylase DeoD-type.